Reading from the N-terminus, the 289-residue chain is tRNA U34 carboxymethyltransferase (289 aa).

Residues Lys-60, Trp-74, Lys-79, Gly-98, 120 to 122 (DPS), 147 to 148 (VE), Tyr-167, and Arg-282 contribute to the carboxy-S-adenosyl-L-methionine site.

Belongs to the class I-like SAM-binding methyltransferase superfamily. CmoB family. Homotetramer.

It catalyses the reaction carboxy-S-adenosyl-L-methionine + 5-hydroxyuridine(34) in tRNA = 5-carboxymethoxyuridine(34) in tRNA + S-adenosyl-L-homocysteine + H(+). Catalyzes carboxymethyl transfer from carboxy-S-adenosyl-L-methionine (Cx-SAM) to 5-hydroxyuridine (ho5U) to form 5-carboxymethoxyuridine (cmo5U) at position 34 in tRNAs. This Campylobacter concisus (strain 13826) protein is tRNA U34 carboxymethyltransferase.